Here is a 515-residue protein sequence, read N- to C-terminus: Putative BTB/POZ domain-containing protein At3g49970 (515 aa).

Residues 1 to 63 (MLEKLSFLLH…CYDISFEINT (63 aa)) enclose the BTB domain. The NPH3 domain maps to 149–409 (DWWADDLAVL…NSDSPAPATA (261 aa)). At Tyr350 the chain carries Phosphotyrosine. The disordered stretch occupies residues 395–417 (QENLSNSDSPAPATAEKTLSPPE). Residues 418 to 452 (LSSYKNELSKLNRENQYLKLELLKVKMKFKELEKE) are a coiled coil. The interval 494 to 515 (INPFGLKQGQTKQPKSRRHSIS) is disordered.

The protein belongs to the NPH3 family.

Its pathway is protein modification; protein ubiquitination. May act as a substrate-specific adapter of an E3 ubiquitin-protein ligase complex (CUL3-RBX1-BTB) which mediates the ubiquitination and subsequent proteasomal degradation of target proteins. The sequence is that of Putative BTB/POZ domain-containing protein At3g49970 from Arabidopsis thaliana (Mouse-ear cress).